A 175-amino-acid polypeptide reads, in one-letter code: Adenylate kinase isoenzyme 6 homolog (175 aa).

ATP-binding residues include G17, G19, K20, T21, and S22. The interval 37–60 is NMPbind; it reads DISSAVKEKELHDGWDSEFQCYIL. The tract at residues 112–122 is LID; it reads KRNYNQHKITN. An ATP-binding site is contributed by R113.

This sequence belongs to the adenylate kinase family. AK6 subfamily. In terms of assembly, monomer and homodimer. Interacts with small ribosomal subunit protein uS11. Not a structural component of 43S pre-ribosomes, but transiently interacts with them by binding to uS11.

It is found in the cytoplasm. Its subcellular location is the nucleus. The enzyme catalyses AMP + ATP = 2 ADP. The catalysed reaction is ATP + H2O = ADP + phosphate + H(+). In terms of biological role, broad-specificity nucleoside monophosphate (NMP) kinase that catalyzes the reversible transfer of the terminal phosphate group between nucleoside triphosphates and monophosphates. Also has ATPase activity. Involved in the late cytoplasmic maturation steps of the 40S ribosomal particles, specifically 18S rRNA maturation. While NMP activity is not required for ribosome maturation, ATPase activity is. Associates transiently with small ribosomal subunit protein uS11. ATP hydrolysis breaks the interaction with uS11. May temporarily remove uS11 from the ribosome to enable a conformational change of the ribosomal RNA that is needed for the final maturation step of the small ribosomal subunit. Its NMP activity may have a role in nuclear energy homeostasis. This is Adenylate kinase isoenzyme 6 homolog from Dictyostelium discoideum (Social amoeba).